We begin with the raw amino-acid sequence, 184 residues long: MGVIQAIDRLMTNPIPDGQVDDILRPQGESPLLQKGYVTTSVDALLNWARTGSMWPMTFGLACCAVEMMHAGAARLDLDRYGIVFRPSPRQSDVMIVAGTLVNKMAPALRKVYDQMPDPKWVISMGSCANGGGYYHYSYSVVRGCDRIVPVDVYVPGCPPTAEALVYGILQLQKKIWRTQTIAG.

[4Fe-4S] cluster is bound by residues Cys63, Cys64, Cys128, and Cys158.

This sequence belongs to the complex I 20 kDa subunit family. In terms of assembly, NDH-1 is composed of 14 different subunits. Subunits NuoB, C, D, E, F, and G constitute the peripheral sector of the complex. It depends on [4Fe-4S] cluster as a cofactor.

The protein localises to the cell inner membrane. It carries out the reaction a quinone + NADH + 5 H(+)(in) = a quinol + NAD(+) + 4 H(+)(out). Functionally, NDH-1 shuttles electrons from NADH, via FMN and iron-sulfur (Fe-S) centers, to quinones in the respiratory chain. The immediate electron acceptor for the enzyme in this species is believed to be ubiquinone. Couples the redox reaction to proton translocation (for every two electrons transferred, four hydrogen ions are translocated across the cytoplasmic membrane), and thus conserves the redox energy in a proton gradient. In Xylella fastidiosa (strain M12), this protein is NADH-quinone oxidoreductase subunit B.